A 224-amino-acid chain; its full sequence is Phosphoribosylformylglycinamidine synthase subunit PurQ (224 aa).

Residues 2–224 (KFAVIQFPGS…SILNHAEVKA (223 aa)) form the Glutamine amidotransferase type-1 domain. Catalysis depends on cysteine 86, which acts as the Nucleophile. Residues histidine 195 and glutamate 197 contribute to the active site.

In terms of assembly, part of the FGAM synthase complex composed of 1 PurL, 1 PurQ and 2 PurS subunits.

The protein resides in the cytoplasm. The catalysed reaction is N(2)-formyl-N(1)-(5-phospho-beta-D-ribosyl)glycinamide + L-glutamine + ATP + H2O = 2-formamido-N(1)-(5-O-phospho-beta-D-ribosyl)acetamidine + L-glutamate + ADP + phosphate + H(+). The enzyme catalyses L-glutamine + H2O = L-glutamate + NH4(+). It participates in purine metabolism; IMP biosynthesis via de novo pathway; 5-amino-1-(5-phospho-D-ribosyl)imidazole from N(2)-formyl-N(1)-(5-phospho-D-ribosyl)glycinamide: step 1/2. In terms of biological role, part of the phosphoribosylformylglycinamidine synthase complex involved in the purines biosynthetic pathway. Catalyzes the ATP-dependent conversion of formylglycinamide ribonucleotide (FGAR) and glutamine to yield formylglycinamidine ribonucleotide (FGAM) and glutamate. The FGAM synthase complex is composed of three subunits. PurQ produces an ammonia molecule by converting glutamine to glutamate. PurL transfers the ammonia molecule to FGAR to form FGAM in an ATP-dependent manner. PurS interacts with PurQ and PurL and is thought to assist in the transfer of the ammonia molecule from PurQ to PurL. The protein is Phosphoribosylformylglycinamidine synthase subunit PurQ of Lactobacillus delbrueckii subsp. bulgaricus (strain ATCC 11842 / DSM 20081 / BCRC 10696 / JCM 1002 / NBRC 13953 / NCIMB 11778 / NCTC 12712 / WDCM 00102 / Lb 14).